The sequence spans 149 residues: Putative pre-16S rRNA nuclease (149 aa).

The protein belongs to the YqgF nuclease family.

Its subcellular location is the cytoplasm. In terms of biological role, could be a nuclease involved in processing of the 5'-end of pre-16S rRNA. The polypeptide is Putative pre-16S rRNA nuclease (Burkholderia orbicola (strain MC0-3)).